The primary structure comprises 145 residues: MSETFDVDVLVHATHRASPFHDKAKTLVERFLAGPGLVYLLWPVALGYLRVVTHPTLLGAPLAPEVAVENIEQFTSRPHVRQVGEANGFWPVYRRVADPVKPRGNLVPDAHLVALMRHHGIATIWSHDRDFRKFEGIRIRDPFSG.

Residues Asp-6 and Asp-109 each contribute to the Mg(2+) site. The PINc domain maps to 15–141; that stretch reads HRASPFHDKA…RKFEGIRIRD (127 aa).

It belongs to the PINc/VapC protein family. Requires Mg(2+) as cofactor.

Toxic component of a type II toxin-antitoxin (TA) system. An RNase. Its cognate antitoxin is VapB48. This Mycobacterium tuberculosis (strain CDC 1551 / Oshkosh) protein is Ribonuclease VapC48.